We begin with the raw amino-acid sequence, 1039 residues long: Multidrug resistance protein MdtB (1039 aa).

A run of 12 helical transmembrane segments spans residues 16–36 (FILR…AGII), 342–362 (DVQF…YVFL), 373–393 (VAVP…GFSI), 396–416 (LTLM…IVVI), 440–460 (IGFT…PLLF), 472–492 (FAVT…TLTP), 537–557 (WLTL…YLLI), 863–883 (LGGT…VLGV), 888–908 (FIHP…ALLA), 911–931 (MAGS…IGIV), 968–988 (ILMT…STGV), and 1002–1022 (GGLV…YLLF).

It belongs to the resistance-nodulation-cell division (RND) (TC 2.A.6) family. MdtB subfamily. As to quaternary structure, part of a tripartite efflux system composed of MdtA, MdtB and MdtC. MdtB forms a heteromultimer with MdtC.

It localises to the cell inner membrane. This is Multidrug resistance protein MdtB from Serratia proteamaculans (strain 568).